Here is a 172-residue protein sequence, read N- to C-terminus: Adenine phosphoribosyltransferase (172 aa).

Belongs to the purine/pyrimidine phosphoribosyltransferase family. Homodimer.

Its subcellular location is the cytoplasm. It carries out the reaction AMP + diphosphate = 5-phospho-alpha-D-ribose 1-diphosphate + adenine. It functions in the pathway purine metabolism; AMP biosynthesis via salvage pathway; AMP from adenine: step 1/1. Functionally, catalyzes a salvage reaction resulting in the formation of AMP, that is energically less costly than de novo synthesis. This chain is Adenine phosphoribosyltransferase, found in Streptococcus equi subsp. zooepidemicus (strain H70).